A 228-amino-acid polypeptide reads, in one-letter code: Thermonuclease (228 aa).

An N-terminal signal peptide occupies residues 1–23; it reads MTEYLLSAGICMAIVSILLIGMA. Positions 24–60 are excised as a propeptide; that stretch reads ISNVSKGQYAKRFFFFATSCLVLTLVVVSSLSSSANA. Residues 58-70 are compositionally biased toward polar residues; sequence ANASQTDNGVNRS. The segment at 58–83 is disordered; that stretch reads ANASQTDNGVNRSGSEDPTVYSATST. Asp100 is a Ca(2+) binding site. The active site involves Arg114. Residues Asp119 and Thr120 each contribute to the Ca(2+) site. Active-site residues include Glu122 and Arg166.

This sequence belongs to the thermonuclease family. It depends on Ca(2+) as a cofactor.

It is found in the secreted. The enzyme catalyses Endonucleolytic cleavage to nucleoside 3'-phosphates and 3'-phosphooligonucleotide end-products.. In terms of biological role, enzyme that catalyzes the hydrolysis of both DNA and RNA at the 5' position of the phosphodiester bond. The chain is Thermonuclease (nuc) from Staphylococcus aureus (strain Mu50 / ATCC 700699).